A 328-amino-acid polypeptide reads, in one-letter code: Endochitinase (328 aa).

The N-terminal stretch at 1-27 is a signal peptide; that stretch reads MKKNRMMMMIWSVGVVWMLLLVGGSYG. The region spanning 28–68 is the Chitin-binding type-1 domain; that stretch reads EQCGRQAGGALCPGGNCCSQFGWCGSTTDYCGPGCQSQCGG. 7 cysteine pairs are disulfide-bonded: Cys30–Cys45, Cys39–Cys51, Cys44–Cys58, Cys62–Cys66, Cys97–Cys159, Cys170–Cys178, and Cys277–Cys309. Glu141 functions as the Proton donor in the catalytic mechanism. The propeptide at 318–328 is removed in mature form; it reads SLLLSDLVTSQ.

Belongs to the glycosyl hydrolase 19 family. Chitinase class I subfamily.

It localises to the vacuole. The enzyme catalyses Random endo-hydrolysis of N-acetyl-beta-D-glucosaminide (1-&gt;4)-beta-linkages in chitin and chitodextrins.. In terms of biological role, defense against chitin-containing fungal pathogens. In Phaseolus vulgaris (Kidney bean), this protein is Endochitinase.